Here is a 389-residue protein sequence, read N- to C-terminus: Alkanesulfonate monooxygenase (389 aa).

Belongs to the SsuD family.

It catalyses the reaction an alkanesulfonate + FMNH2 + O2 = an aldehyde + FMN + sulfite + H2O + 2 H(+). Its function is as follows. Catalyzes the desulfonation of aliphatic sulfonates. This Variovorax paradoxus (strain S110) protein is Alkanesulfonate monooxygenase.